Reading from the N-terminus, the 597-residue chain is Formate--tetrahydrofolate ligase (597 aa).

84–91 (TPLGEGKS) provides a ligand contact to ATP.

Belongs to the formate--tetrahydrofolate ligase family.

It catalyses the reaction (6S)-5,6,7,8-tetrahydrofolate + formate + ATP = (6R)-10-formyltetrahydrofolate + ADP + phosphate. It functions in the pathway one-carbon metabolism; tetrahydrofolate interconversion. The protein is Formate--tetrahydrofolate ligase of Dehalococcoides mccartyi (strain CBDB1).